A 58-amino-acid chain; its full sequence is Alpha-conotoxin AuIB (58 aa).

The signal sequence occupies residues 1 to 16 (MFTVFLLVVLATTVVS). A propeptide spanning residues 17–39 (FTSDRASDGRKDAASGLIALTMK) is cleaved from the precursor. Cystine bridges form between Cys-41–Cys-47 and Cys-42–Cys-54. Residue Cys-54 is modified to Cysteine amide.

Expressed by the venom duct.

It localises to the secreted. Functionally, alpha-conotoxins act on postsynaptic membranes, they bind to the nicotinic acetylcholine receptors (nAChR) and thus inhibit them. This toxin blocks mammalian nAChR alpha-3-beta-4/CHRNA3-CHRNB4 subunits. Also exhibits inhibition of D.melanogaster alpha-7/CHRNA7 nAChRs. The sequence is that of Alpha-conotoxin AuIB from Conus aulicus (Princely cone).